We begin with the raw amino-acid sequence, 137 residues long: Peptide methionine sulfoxide reductase MsrB (137 aa).

Residues 7–129 (AEELKKKLSE…NSASLAFSDE (123 aa)) form the MsrB domain. Positions 46, 49, 95, and 98 each coordinate Zn(2+). Residue Cys-118 is the Nucleophile of the active site.

Belongs to the MsrB Met sulfoxide reductase family. Requires Zn(2+) as cofactor.

The enzyme catalyses L-methionyl-[protein] + [thioredoxin]-disulfide + H2O = L-methionyl-(R)-S-oxide-[protein] + [thioredoxin]-dithiol. The protein is Peptide methionine sulfoxide reductase MsrB of Salmonella dublin (strain CT_02021853).